The primary structure comprises 601 residues: Elongation factor 4 (601 aa).

One can recognise a tr-type G domain in the interval 6 to 188 (NRIRNFCIIA…QVVTKIAPPK (183 aa)). Residues 18 to 23 (DHGKST) and 135 to 138 (NKID) contribute to the GTP site.

The protein belongs to the TRAFAC class translation factor GTPase superfamily. Classic translation factor GTPase family. LepA subfamily.

It is found in the cell membrane. It catalyses the reaction GTP + H2O = GDP + phosphate + H(+). Required for accurate and efficient protein synthesis under certain stress conditions. May act as a fidelity factor of the translation reaction, by catalyzing a one-codon backward translocation of tRNAs on improperly translocated ribosomes. Back-translocation proceeds from a post-translocation (POST) complex to a pre-translocation (PRE) complex, thus giving elongation factor G a second chance to translocate the tRNAs correctly. Binds to ribosomes in a GTP-dependent manner. The sequence is that of Elongation factor 4 from Desulforamulus reducens (strain ATCC BAA-1160 / DSM 100696 / MI-1) (Desulfotomaculum reducens).